The primary structure comprises 383 residues: MGSIGAASMEFCFDVFKELKVHHANDNMLYSPFAILSTLAMVFLGAKDSTRTQINKVVHFDKLPGFGDSIEAQCGTSANVHSSLRDILNQITKQNDAYSFSLASRLYAQETYTVVPEYLQCVKELYRGGLESVNFQTAADQARGLINAWVESQTNGIIRNILQPSSVDSQTAMVLVNAIAFKGLWEKAFKAEDTQTIPFRVTEQESKPVQMMHQIGSFKVASMASEKMKILELPFASGTMSMLVLLPDDVSGLEQLESTISFEKLTEWTSSSIMEERKVKVYLPRMKMEEKYNLTSLLMAMGITDLFSSSANLSGISSVGSLKIPQAVHAAYAEINEAGRDVVGSAEAGVDATEEFRADHPFLFCVKHIETNAILLFGRCVSP.

Residue G2 is modified to N-acetylglycine. A signal peptide (not cleaved) is located at residues 22 to 48 (HHANDNMLYSPFAILSTLAMVFLGAKD). Position 69 is a phosphoserine (S69). C74 and C121 form a disulfide bridge. 2 N-linked (GlcNAc...) asparagine glycosylation sites follow: N293 and N312. S345 is modified (phosphoserine).

Belongs to the serpin family. Ov-serpin subfamily. In terms of processing, the signal sequence is not cleaved. The functional signal for membrane translocation of ovalbumin becomes accessible when the nascent chain is 50 to 60 residues long. The hydrophobic sequence which lies between residues 27 and 43 folds back on the preceding residues to form an amphipathic hairpin structure which is the signal element recognized by the membrane. In terms of tissue distribution, major protein of egg white.

It localises to the secreted. Its function is as follows. Storage protein of egg white. Lack protease inhibitory activity. This Coturnix coturnix (Common quail) protein is Ovalbumin (SERPINB14).